A 444-amino-acid chain; its full sequence is Phosphoribosylamine--glycine ligase (444 aa).

One can recognise an ATP-grasp domain in the interval 109 to 324; sequence RNLFKKYEID…FLDVCFAIAE (216 aa). 140 to 202 is a binding site for ATP; that stretch reads MTSLGKDVVV…EEKLVGVEFT (63 aa). Mg(2+)-binding residues include Gln282, Glu294, and Asn296. Mn(2+)-binding residues include Gln282, Glu294, and Asn296.

It belongs to the GARS family. It depends on Mg(2+) as a cofactor. The cofactor is Mn(2+).

It catalyses the reaction 5-phospho-beta-D-ribosylamine + glycine + ATP = N(1)-(5-phospho-beta-D-ribosyl)glycinamide + ADP + phosphate + H(+). Its pathway is purine metabolism; IMP biosynthesis via de novo pathway; N(1)-(5-phospho-D-ribosyl)glycinamide from 5-phospho-alpha-D-ribose 1-diphosphate: step 2/2. The chain is Phosphoribosylamine--glycine ligase from Methanococcus maripaludis (strain C7 / ATCC BAA-1331).